The primary structure comprises 488 residues: Germacrene A hydroxylase (488 aa).

Residues 7–23 (TSIALATILFFVYKFAT) traverse the membrane as a helical; Signal-anchor for type II membrane protein segment. N-linked (GlcNAc...) asparagine glycans are attached at residues N169, N260, N379, and N410. C432 contributes to the heme binding site.

The protein belongs to the cytochrome P450 family. Expressed in floral glandular trichomes.

Its subcellular location is the endoplasmic reticulum membrane. It catalyses the reaction (+)-(R)-germacrene A + 3 reduced [NADPH--hemoprotein reductase] + 3 O2 = germacra-1(10),4,11(13)-trien-12-oate + 3 oxidized [NADPH--hemoprotein reductase] + 4 H2O + 4 H(+). Its pathway is secondary metabolite biosynthesis; terpenoid biosynthesis. Its function is as follows. Involved in the biosynthesis of germacrene-derived sesquiterpene lactones. Component of the parthenolide biosynthetic pathway; parthenolide and conjugates are promising anti-cancer drugs highly active against colon cancer cells. Catalyzes three consecutive oxidations of germacrene A to produce germacrene A acid. This Tanacetum parthenium (Feverfew) protein is Germacrene A hydroxylase.